The following is a 329-amino-acid chain: Glycerol-3-phosphate dehydrogenase [NAD(P)+] (329 aa).

The NADPH site is built by Ser13, Trp14, His34, and Lys105. Residues Lys105, Gly134, and Ser136 each contribute to the sn-glycerol 3-phosphate site. Ala138 is a binding site for NADPH. Residues Lys189, Asp242, Ser252, Arg253, and Asn254 each contribute to the sn-glycerol 3-phosphate site. Lys189 serves as the catalytic Proton acceptor. Arg253 provides a ligand contact to NADPH. Residues Val277 and Glu279 each coordinate NADPH.

The protein belongs to the NAD-dependent glycerol-3-phosphate dehydrogenase family.

The protein localises to the cytoplasm. The catalysed reaction is sn-glycerol 3-phosphate + NAD(+) = dihydroxyacetone phosphate + NADH + H(+). It catalyses the reaction sn-glycerol 3-phosphate + NADP(+) = dihydroxyacetone phosphate + NADPH + H(+). The protein operates within membrane lipid metabolism; glycerophospholipid metabolism. Its function is as follows. Catalyzes the reduction of the glycolytic intermediate dihydroxyacetone phosphate (DHAP) to sn-glycerol 3-phosphate (G3P), the key precursor for phospholipid synthesis. This chain is Glycerol-3-phosphate dehydrogenase [NAD(P)+], found in Legionella pneumophila subsp. pneumophila (strain Philadelphia 1 / ATCC 33152 / DSM 7513).